A 227-amino-acid polypeptide reads, in one-letter code: Cytochrome c oxidase subunit 2 (227 aa).

The Mitochondrial intermembrane segment spans residues Met-1–Asn-22. Residues Phe-23–Leu-44 traverse the membrane as a helical segment. The Mitochondrial matrix portion of the chain corresponds to Met-45–Glu-60. A helical transmembrane segment spans residues Val-61–Leu-81. Residues Arg-82–Ile-227 are Mitochondrial intermembrane-facing. 6 residues coordinate Cu cation: His-161, Cys-196, Glu-198, Cys-200, His-204, and Met-207. Glu-198 lines the Mg(2+) pocket. Tyr-218 bears the Phosphotyrosine mark.

It belongs to the cytochrome c oxidase subunit 2 family. In terms of assembly, component of the cytochrome c oxidase (complex IV, CIV), a multisubunit enzyme composed of 14 subunits. The complex is composed of a catalytic core of 3 subunits MT-CO1, MT-CO2 and MT-CO3, encoded in the mitochondrial DNA, and 11 supernumerary subunits COX4I, COX5A, COX5B, COX6A, COX6B, COX6C, COX7A, COX7B, COX7C, COX8 and NDUFA4, which are encoded in the nuclear genome. The complex exists as a monomer or a dimer and forms supercomplexes (SCs) in the inner mitochondrial membrane with NADH-ubiquinone oxidoreductase (complex I, CI) and ubiquinol-cytochrome c oxidoreductase (cytochrome b-c1 complex, complex III, CIII), resulting in different assemblies (supercomplex SCI(1)III(2)IV(1) and megacomplex MCI(2)III(2)IV(2)). Found in a complex with TMEM177, COA6, COX18, COX20, SCO1 and SCO2. Interacts with TMEM177 in a COX20-dependent manner. Interacts with COX20. Interacts with COX16. Requires Cu cation as cofactor.

Its subcellular location is the mitochondrion inner membrane. The enzyme catalyses 4 Fe(II)-[cytochrome c] + O2 + 8 H(+)(in) = 4 Fe(III)-[cytochrome c] + 2 H2O + 4 H(+)(out). Functionally, component of the cytochrome c oxidase, the last enzyme in the mitochondrial electron transport chain which drives oxidative phosphorylation. The respiratory chain contains 3 multisubunit complexes succinate dehydrogenase (complex II, CII), ubiquinol-cytochrome c oxidoreductase (cytochrome b-c1 complex, complex III, CIII) and cytochrome c oxidase (complex IV, CIV), that cooperate to transfer electrons derived from NADH and succinate to molecular oxygen, creating an electrochemical gradient over the inner membrane that drives transmembrane transport and the ATP synthase. Cytochrome c oxidase is the component of the respiratory chain that catalyzes the reduction of oxygen to water. Electrons originating from reduced cytochrome c in the intermembrane space (IMS) are transferred via the dinuclear copper A center (CU(A)) of subunit 2 and heme A of subunit 1 to the active site in subunit 1, a binuclear center (BNC) formed by heme A3 and copper B (CU(B)). The BNC reduces molecular oxygen to 2 water molecules using 4 electrons from cytochrome c in the IMS and 4 protons from the mitochondrial matrix. The sequence is that of Cytochrome c oxidase subunit 2 (Mtco2) from Mus musculus (Mouse).